Consider the following 61-residue polypeptide: Metallothionein-I, hippocampal (61 aa).

An N-acetylmethionine modification is found at M1. A beta region spans residues 1-29 (MDPNCSCATGDSCACASTCKCKECKCTSC). Positions 5, 7, 13, 15, 19, 21, 24, 26, 29, 33, 34, 36, 37, 41, 44, 48, 50, and 57 each coordinate a divalent metal cation. The interval 30–61 (KKSCCSCCPVGCAKCAQGCICKGASDKCSCCA) is alpha. The residue at position 58 (S58) is a Phosphoserine. Positions 59 and 60 each coordinate a divalent metal cation.

The protein belongs to the metallothionein superfamily. Type 1 family.

Functionally, metallothioneins have a high content of cysteine residues that bind various heavy metals; these proteins are transcriptionally regulated by both heavy metals and glucocorticoids. This isoform may play a role in regulating the transport, accumulation, and compartmentation of zinc in the hippocampus. The chain is Metallothionein-I, hippocampal from Bos taurus (Bovine).